A 166-amino-acid polypeptide reads, in one-letter code: MGDPRKPRKKWSPPGHPWVKERLIEEMKLMGEYGLRNKREIWIAAAMLRRYRHRARELLALPAEVREKEEKALLKRLYDLGLVDENATLDDVLSLTVRDLLERRLQTVVYKKGLAKSIYHARQLVTHGHIAINGRRVTSPGYIVRRDEEELIGYAPTSPYFKKAQQ.

The region spanning 103-165 (RRLQTVVYKK…PTSPYFKKAQ (63 aa)) is the S4 RNA-binding domain.

It belongs to the universal ribosomal protein uS4 family. Part of the 30S ribosomal subunit. Contacts protein S5. The interaction surface between S4 and S5 is involved in control of translational fidelity.

Its function is as follows. One of the primary rRNA binding proteins, it binds directly to 16S rRNA where it nucleates assembly of the body of the 30S subunit. Functionally, with S5 and S12 plays an important role in translational accuracy. The polypeptide is Small ribosomal subunit protein uS4 (Ignicoccus hospitalis (strain KIN4/I / DSM 18386 / JCM 14125)).